The chain runs to 121 residues: Ribonuclease P protein component (121 aa).

The protein belongs to the RnpA family. As to quaternary structure, consists of a catalytic RNA component (M1 or rnpB) and a protein subunit.

The catalysed reaction is Endonucleolytic cleavage of RNA, removing 5'-extranucleotides from tRNA precursor.. Its function is as follows. RNaseP catalyzes the removal of the 5'-leader sequence from pre-tRNA to produce the mature 5'-terminus. It can also cleave other RNA substrates such as 4.5S RNA. The protein component plays an auxiliary but essential role in vivo by binding to the 5'-leader sequence and broadening the substrate specificity of the ribozyme. This Alcanivorax borkumensis (strain ATCC 700651 / DSM 11573 / NCIMB 13689 / SK2) protein is Ribonuclease P protein component.